The following is a 423-amino-acid chain: Serine--tRNA ligase (423 aa).

230–232 contributes to the L-serine binding site; the sequence is TSE. 261–263 lines the ATP pocket; sequence RSE. E284 contacts L-serine. ATP is bound at residue 348–351; sequence EISS. S384 contacts L-serine.

This sequence belongs to the class-II aminoacyl-tRNA synthetase family. Type-1 seryl-tRNA synthetase subfamily. As to quaternary structure, homodimer. The tRNA molecule binds across the dimer.

The protein resides in the cytoplasm. The enzyme catalyses tRNA(Ser) + L-serine + ATP = L-seryl-tRNA(Ser) + AMP + diphosphate + H(+). It catalyses the reaction tRNA(Sec) + L-serine + ATP = L-seryl-tRNA(Sec) + AMP + diphosphate + H(+). The protein operates within aminoacyl-tRNA biosynthesis; selenocysteinyl-tRNA(Sec) biosynthesis; L-seryl-tRNA(Sec) from L-serine and tRNA(Sec): step 1/1. Functionally, catalyzes the attachment of serine to tRNA(Ser). Is also able to aminoacylate tRNA(Sec) with serine, to form the misacylated tRNA L-seryl-tRNA(Sec), which will be further converted into selenocysteinyl-tRNA(Sec). In Macrococcus caseolyticus (strain JCSC5402) (Macrococcoides caseolyticum), this protein is Serine--tRNA ligase.